Reading from the N-terminus, the 532-residue chain is Cytochrome P450 99A2 (532 aa).

The helical transmembrane segment at 30-50 (SAATLTLVSLLTLPILLALLT) threads the bilayer. Cys-468 serves as a coordination point for heme. The helical transmembrane segment at 473–493 (FGMVLLELIVARLLYYFDWSL) threads the bilayer.

The protein belongs to the cytochrome P450 family. Heme is required as a cofactor.

Its subcellular location is the membrane. In terms of biological role, involved in momilactone phytoalexins biosynthesis. Participates in the biosynthetic steps between 9-beta-pimara-7,15-diene and 3-beta-hydroxy-9-beta-pimara-7,15-dien-19,6-beta-olide. This chain is Cytochrome P450 99A2 (CYP99A2), found in Oryza sativa subsp. japonica (Rice).